A 682-amino-acid polypeptide reads, in one-letter code: E3 ubiquitin-protein ligase RNF103 (682 aa).

4 consecutive transmembrane segments (helical) span residues 6–26 (FFLL…EAIV), 326–346 (LFVL…FITQ), 366–386 (LLII…LDSF), and 411–431 (MFYS…GLLI). The segment covering 525-542 (EEMSESSQDTENDSDSDN) has biased composition (acidic residues). A disordered region spans residues 525–549 (EEMSESSQDTENDSDSDNTDTFSSS). The segment at 618–660 (CVVCLENFENGCLLMGLPCGHVFHQNCIVMWLAGGRHCCPVCR) adopts an RING-type zinc-finger fold.

In terms of assembly, interacts with DERL1 and VCP. Expressed in different tissues including hippocampus, cerebral cortex, heart, kidney, spleen and lung. Expression is increased in hippocampus and frontal cortex after chronic treatment with antidepressants.

The protein localises to the endoplasmic reticulum membrane. The catalysed reaction is S-ubiquitinyl-[E2 ubiquitin-conjugating enzyme]-L-cysteine + [acceptor protein]-L-lysine = [E2 ubiquitin-conjugating enzyme]-L-cysteine + N(6)-ubiquitinyl-[acceptor protein]-L-lysine.. Its pathway is protein modification; protein ubiquitination. Its function is as follows. Acts as an E2-dependent E3 ubiquitin-protein ligase, probably involved in the ER-associated protein degradation pathway. The chain is E3 ubiquitin-protein ligase RNF103 (Rnf103) from Rattus norvegicus (Rat).